The primary structure comprises 117 residues: DNA-binding protein VNG_2008H (117 aa).

Residues 1–59 form a disordered region; that stretch reads MSGNPDDDRLEELRQRKKEQLKQQQQGGDAEREAQQQQAQQAEQQKQAMLKQNLTDGAR. The span at 11-21 shows a compositional bias: basic and acidic residues; the sequence is EELRQRKKEQL. The span at 35–48 shows a compositional bias: low complexity; it reads QQQQAQQAEQQKQA.

It belongs to the PDCD5 family.

In Halobacterium salinarum (strain ATCC 700922 / JCM 11081 / NRC-1) (Halobacterium halobium), this protein is DNA-binding protein VNG_2008H.